The chain runs to 218 residues: 7-cyano-7-deazaguanine synthase 1 (218 aa).

9–19 contacts ATP; the sequence is YSGGMDSFTVL. The Zn(2+) site is built by C185, C193, C196, and C199.

Belongs to the QueC family. Requires Zn(2+) as cofactor.

It carries out the reaction 7-carboxy-7-deazaguanine + NH4(+) + ATP = 7-cyano-7-deazaguanine + ADP + phosphate + H2O + H(+). Its pathway is purine metabolism; 7-cyano-7-deazaguanine biosynthesis. Functionally, catalyzes the ATP-dependent conversion of 7-carboxy-7-deazaguanine (CDG) to 7-cyano-7-deazaguanine (preQ(0)). The protein is 7-cyano-7-deazaguanine synthase 1 of Colwellia psychrerythraea (strain 34H / ATCC BAA-681) (Vibrio psychroerythus).